We begin with the raw amino-acid sequence, 515 residues long: Vacuolar segregation protein PEP7 (515 aa).

A C2H2-type zinc finger spans residues 6–29 (VSCPICLRKFDNLQALNAHLDVEH). Residues 36–58 (DSLGSNDSRLVNGKQKKARSVDS) are disordered. The FYVE-type 1; atypical zinc-finger motif lies at 72–137 (KKGKSCCHTC…CCHDCFVTKP (66 aa)). Residues Cys78, Cys81, Cys94, Cys97, Cys102, His105, Cys129, Cys132, Cys221, Cys224, Cys237, Cys240, Cys245, Cys252, Cys289, and Cys292 each coordinate Zn(2+). The FYVE-type 2 zinc-finger motif lies at 215–297 (DRSVLFCNIC…LCSHCIDMLF (83 aa)).

Interacts with VPS21, VPS45, PEP3 and PEP5.

Its subcellular location is the vacuole membrane. Its function is as follows. Required for vacuole segregation and vacuole protein sorting. Possibly part of a complex which tethers the vacuole membrane to microtubules, either directly or via kinesin or dynein-like motor proteins. Probably functions in several interorganelle traffic pathways. The polypeptide is Vacuolar segregation protein PEP7 (PEP7) (Saccharomyces cerevisiae (strain ATCC 204508 / S288c) (Baker's yeast)).